The chain runs to 104 residues: Large ribosomal subunit protein uL24 (104 aa).

It belongs to the universal ribosomal protein uL24 family. Part of the 50S ribosomal subunit.

Its function is as follows. One of two assembly initiator proteins, it binds directly to the 5'-end of the 23S rRNA, where it nucleates assembly of the 50S subunit. In terms of biological role, one of the proteins that surrounds the polypeptide exit tunnel on the outside of the subunit. The chain is Large ribosomal subunit protein uL24 from Maricaulis maris (strain MCS10) (Caulobacter maris).